The chain runs to 87 residues: uncharacterized protein (87 aa).

This sequence to A.fulgidus AF_0255 and AF_1348.

This is an uncharacterized protein from Archaeoglobus fulgidus (strain ATCC 49558 / DSM 4304 / JCM 9628 / NBRC 100126 / VC-16).